Here is a 491-residue protein sequence, read N- to C-terminus: Glutamyl-tRNA(Gln) amidotransferase subunit A (491 aa).

Catalysis depends on charge relay system residues K76 and S154. S178 acts as the Acyl-ester intermediate in catalysis.

This sequence belongs to the amidase family. GatA subfamily. In terms of assembly, heterotrimer of A, B and C subunits.

The enzyme catalyses L-glutamyl-tRNA(Gln) + L-glutamine + ATP + H2O = L-glutaminyl-tRNA(Gln) + L-glutamate + ADP + phosphate + H(+). Its function is as follows. Allows the formation of correctly charged Gln-tRNA(Gln) through the transamidation of misacylated Glu-tRNA(Gln) in organisms which lack glutaminyl-tRNA synthetase. The reaction takes place in the presence of glutamine and ATP through an activated gamma-phospho-Glu-tRNA(Gln). This chain is Glutamyl-tRNA(Gln) amidotransferase subunit A, found in Cereibacter sphaeroides (strain ATCC 17023 / DSM 158 / JCM 6121 / CCUG 31486 / LMG 2827 / NBRC 12203 / NCIMB 8253 / ATH 2.4.1.) (Rhodobacter sphaeroides).